The primary structure comprises 159 residues: uncharacterized protein (159 aa).

3 helical membrane passes run 16-36 (IVLPLVQIIHVSGHSFMAFIF), 84-104 (VYAGGCLFNLITIFAINLLII), and 112-132 (VFFYQFVYFSTYYVFFALLPV).

The protein resides in the cell membrane. This is an uncharacterized protein from Bacillus subtilis (strain 168).